The sequence spans 310 residues: Vomeronasal type-1 receptor 40 (310 aa).

Over 1–20 (MNKANMLRTDKDMQIILFSE) the chain is Extracellular. The helical transmembrane segment at 21-41 (VSVGISANSILFIAHVCMILG) threads the bilayer. Topologically, residues 42–50 (ENRPKPIDL) are cytoplasmic. Residues 51-71 (YIAFLSLTQLMLLITMGLIAV) traverse the membrane as a helical segment. At 72 to 93 (DMFLSQGIWDSTTCQSLIYLHR) the chain is on the extracellular side. A disulfide bond links cysteine 85 and cysteine 172. A helical membrane pass occupies residues 94–114 (LLRGLSLCATCLLNILWTITL). Residues 115 to 134 (SSRSFCSTKFKHKSPHHISG) lie on the Cytoplasmic side of the membrane. The helical transmembrane segment at 135 to 155 (AFIFFCVLYMSFSSHLFISII) threads the bilayer. Topologically, residues 156–190 (ATHNLTSENFIYVTQSCSLLPLSYSRTSMFSAPMA) are extracellular. Residue asparagine 159 is glycosylated (N-linked (GlcNAc...) asparagine). A helical transmembrane segment spans residues 191–211 (IREAFLVSLMALSSGYMVALL). Residues 212–238 (WRHKKQAQHLHSTSLSSKASPEQRATR) lie on the Cytoplasmic side of the membrane. Residues 239–259 (TILLLMSFFVVLYILENAVFY) traverse the membrane as a helical segment. Over 260–268 (SRIKFKDGS) the chain is Extracellular. Residues 269 to 289 (ILYCVQIILCHSYATVNPFVF) form a helical membrane-spanning segment. Residues 290–310 (ICTEKHIIKFWESKCGRIVNI) are Cytoplasmic-facing.

Belongs to the G-protein coupled receptor 1 family.

It localises to the cell membrane. Putative pheromone receptor implicated in the regulation of social and reproductive behavior. The sequence is that of Vomeronasal type-1 receptor 40 (Vmn1r40) from Mus musculus (Mouse).